The following is a 429-amino-acid chain: G2/mitotic-specific cyclin-B1 (429 aa).

A disordered region spans residues 71–114 (TGKVSAKIPPPKPLEKVPPVSEPEVELAETHEPEPVMDEKLSPE). K73 bears the N6-acetyllysine mark. Over residues 98 to 112 (AETHEPEPVMDEKLS) the composition is skewed to basic and acidic residues. S122 carries the phosphoserine; by CDK1 modification. The residue at position 124 (S124) is a Phosphoserine. The residue at position 129 (S129) is a Phosphoserine; by PLK1. S143 carries the post-translational modification Phosphoserine. 2 interaction with CDK2 regions span residues 165–173 (EYVKDIYAY) and 254–257 (YEEM). T317 is subject to Phosphothreonine.

It belongs to the cyclin family. Cyclin AB subfamily. In terms of assembly, interacts with the CDC2 protein kinase to form a serine/threonine kinase holoenzyme complex also known as maturation promoting factor (MPF). The cyclin subunit imparts substrate specificity to the complex. Binds HEI10. Interacts with catalytically active RALBP1 and CDC2 during mitosis to form an endocytotic complex during interphase. Interacts with CCNF; interaction is required for nuclear localization. Interacts with CDK5RAP3. Interacts with RFPL4A and UBE2A. Interacts with INCA1. Ubiquitinated by the SCF(NIPA) complex during interphase, leading to its destruction. Not ubiquitinated during G2/M phases. In terms of processing, phosphorylated by PLK1 at Ser-129 on centrosomes during prophase: phosphorylation by PLK1 does not cause nuclear import. Phosphorylation at Ser-143 was also reported to be mediated by PLK1 but Ser-129 seems to be the primary phosphorylation site.

The protein localises to the cytoplasm. It localises to the nucleus. The protein resides in the cytoskeleton. Its subcellular location is the microtubule organizing center. It is found in the centrosome. Functionally, essential for the control of the cell cycle at the G2/M (mitosis) transition. The chain is G2/mitotic-specific cyclin-B1 (CCNB1) from Mesocricetus auratus (Golden hamster).